A 189-amino-acid chain; its full sequence is uncharacterized protein (189 aa).

This sequence to M.jannaschii MJ1461.

This is an uncharacterized protein from Methanocaldococcus jannaschii (strain ATCC 43067 / DSM 2661 / JAL-1 / JCM 10045 / NBRC 100440) (Methanococcus jannaschii).